Here is an 80-residue protein sequence, read N- to C-terminus: Metallothionein-like protein type 2, MT2-4/MT2-25 (80 aa).

It belongs to the metallothionein superfamily. Type 15 family.

Its function is as follows. Metallothioneins have a high content of cysteine residues that bind various heavy metals. The protein is Metallothionein-like protein type 2, MT2-4/MT2-25 of Brassica juncea (Indian mustard).